Here is a 58-residue protein sequence, read N- to C-terminus: uncharacterized protein (58 aa).

This sequence belongs to the ycf18/nblA family.

The protein localises to the plastid. The protein resides in the chloroplast. This is an uncharacterized protein from Porphyra purpurea (Red seaweed).